We begin with the raw amino-acid sequence, 453 residues long: uncharacterized protein (453 aa).

One can recognise a TRAM domain in the interval 5 to 63 (LLKKNQSVELTIEDLTHDGSGVGKIDGYPLFIPNALPGEKITAKITKLNKNYGFARMEN). [4Fe-4S] cluster is bound by residues Cys76, Cys82, Cys85, and Cys162. The S-adenosyl-L-methionine site is built by Gln285, Tyr314, Glu335, and Asp383. The active-site Nucleophile is the Cys410.

The protein belongs to the class I-like SAM-binding methyltransferase superfamily. RNA M5U methyltransferase family.

This is an uncharacterized protein from Listeria innocua serovar 6a (strain ATCC BAA-680 / CLIP 11262).